The following is a 565-amino-acid chain: Perivitellin-2 67 kDa subunit (565 aa).

Positions 1–26 are cleaved as a signal peptide; it reads MSQLRWWVVSQLLLLIVVCILDHSEG. In terms of domain architecture, MACPF spans 27 to 340; it reads ARVCPKIVPG…AKVANLDRLT (314 aa).

As to quaternary structure, perivitellin-2 is a heterooctamer of 4 identical 98 kDa heterodimers, each composed of one 31 kDa and one 67 kDa subunits. The 98 kDa heterodimer subunits are held together by disulfide bridges while the heterodimers are assembled into the native perivitellin-2 octamer by non-covalent forces. Post-translationally, glycosylated. Contains four O-linked and one N-linked oligosaccharide bonds. The protein contains 2.5% of carbohydrates (high levels of mannose, galactose, and NAcGlucosamine, and small amounts of NacGalactosamine). In terms of processing, PV2 is a very high density lipoprotein (VHDL). It contains 3.75% of lipids. The major lipid classes are free sterols and phospholipids and also have significant quantities of energy-providing triacylglycerides and free fatty acids. In terms of tissue distribution, produced by albumen secretory cells. Found in developing eggs.

It is found in the secreted. Its subcellular location is the target cell membrane. Its function is as follows. The egg defensive protein perivitellin-2 is a pore-forming two-subunit glycoprotein that affects both the nervous and digestive systems of mammals. In addition, it is a source of both structural and energetic molecules during embryonic development. The tachylectin subunit (31 kDa) binds target membranes while the MACPF subunit (67 kDa) disrupts lipid bilayers forming large pores altering the plasma membrance conductance. Both in vivo and in vitro, the protein shows wide pH range stability and is resistant to enzymatic proteolysis from gastrointestinal environments. It specifically binds mature enterocytes but does not cause cell disruption on caco-2 (human colorectal adenocarcinoma cells) or rat intestinal cells. After oral administration to mice, it binds enterocytes and induces large dose-dependent morphological changes on their small intestine mucosa, reducing the absorptive surface. Additionally, it is detected in the Peyer's patches where it activates lymphoid follicles and triggers apoptosis. The toxin can also traverse the intestinal barrier and induce oral adaptive immunity with evidence of circulating antibody response. The toxin also shows hemagglutination properties thanks to the tachylectin subunit, but does not show hemolytic activity. In addition to enterotoxin activity, the toxin also acts as a neurotoxin, since an intraperitoneal injection induces paralysis of the mice rear limbs, followed by death. This chain is Perivitellin-2 67 kDa subunit, found in Pomacea canaliculata (Golden apple snail).